Consider the following 404-residue polypeptide: Phosphopentomutase (404 aa).

The Mn(2+) site is built by D10, D303, H308, D344, H345, and H356.

Belongs to the phosphopentomutase family. It depends on Mn(2+) as a cofactor.

The protein resides in the cytoplasm. The catalysed reaction is 2-deoxy-alpha-D-ribose 1-phosphate = 2-deoxy-D-ribose 5-phosphate. The enzyme catalyses alpha-D-ribose 1-phosphate = D-ribose 5-phosphate. The protein operates within carbohydrate degradation; 2-deoxy-D-ribose 1-phosphate degradation; D-glyceraldehyde 3-phosphate and acetaldehyde from 2-deoxy-alpha-D-ribose 1-phosphate: step 1/2. Isomerase that catalyzes the conversion of deoxy-ribose 1-phosphate (dRib-1-P) and ribose 1-phosphate (Rib-1-P) to deoxy-ribose 5-phosphate (dRib-5-P) and ribose 5-phosphate (Rib-5-P), respectively. The sequence is that of Phosphopentomutase from Shewanella oneidensis (strain ATCC 700550 / JCM 31522 / CIP 106686 / LMG 19005 / NCIMB 14063 / MR-1).